We begin with the raw amino-acid sequence, 493 residues long: Alpha-amylase-related protein (493 aa).

A signal peptide spans 1-19 (MFKLAFTLTLCLAGSLSLA). Pyrrolidone carboxylic acid is present on glutamine 20. Cysteine 47 and cysteine 103 are joined by a disulfide. Ca(2+) contacts are provided by asparagine 117, glutamine 168, and aspartate 177. A disulfide bridge connects residues cysteine 156 and cysteine 170. Arginine 205 contacts chloride. The active-site Nucleophile is aspartate 207. Histidine 211 is a Ca(2+) binding site. Catalysis depends on glutamate 244, which acts as the Proton donor. Positions 307 and 342 each coordinate chloride. 3 cysteine pairs are disulfide-bonded: cysteine 375–cysteine 381, cysteine 417–cysteine 440, and cysteine 447–cysteine 459.

Belongs to the glycosyl hydrolase 13 family. Monomer. Ca(2+) serves as cofactor. Requires chloride as cofactor.

Its subcellular location is the secreted. It catalyses the reaction Endohydrolysis of (1-&gt;4)-alpha-D-glucosidic linkages in polysaccharides containing three or more (1-&gt;4)-alpha-linked D-glucose units.. This Drosophila orena (Fruit fly) protein is Alpha-amylase-related protein (Amyrel).